Reading from the N-terminus, the 79-residue chain is Cell division protein ZapB (79 aa).

Residues 6 to 78 (FEKLEVKVQQ…LRALLGKMEE (73 aa)) adopt a coiled-coil conformation.

It belongs to the ZapB family. Homodimer. The ends of the coiled-coil dimer bind to each other, forming polymers. Interacts with FtsZ.

The protein resides in the cytoplasm. Its function is as follows. Non-essential, abundant cell division factor that is required for proper Z-ring formation. It is recruited early to the divisome by direct interaction with FtsZ, stimulating Z-ring assembly and thereby promoting cell division earlier in the cell cycle. Its recruitment to the Z-ring requires functional FtsA or ZipA. The polypeptide is Cell division protein ZapB (Yersinia pseudotuberculosis serotype O:1b (strain IP 31758)).